Consider the following 276-residue polypeptide: Formamidopyrimidine-DNA glycosylase (276 aa).

P2 functions as the Schiff-base intermediate with DNA in the catalytic mechanism. The active-site Proton donor is the E3. K58 acts as the Proton donor; for beta-elimination activity in catalysis. DNA is bound by residues H92, R111, and K154. An FPG-type zinc finger spans residues 239-273 (QVYGHVGEPCPVCGTKFEKIKVNGRGTTFCPHCQV). R263 serves as the catalytic Proton donor; for delta-elimination activity.

This sequence belongs to the FPG family. In terms of assembly, monomer. It depends on Zn(2+) as a cofactor.

The catalysed reaction is Hydrolysis of DNA containing ring-opened 7-methylguanine residues, releasing 2,6-diamino-4-hydroxy-5-(N-methyl)formamidopyrimidine.. The enzyme catalyses 2'-deoxyribonucleotide-(2'-deoxyribose 5'-phosphate)-2'-deoxyribonucleotide-DNA = a 3'-end 2'-deoxyribonucleotide-(2,3-dehydro-2,3-deoxyribose 5'-phosphate)-DNA + a 5'-end 5'-phospho-2'-deoxyribonucleoside-DNA + H(+). Functionally, involved in base excision repair of DNA damaged by oxidation or by mutagenic agents. Acts as a DNA glycosylase that recognizes and removes damaged bases. Has a preference for oxidized purines, such as 7,8-dihydro-8-oxoguanine (8-oxoG). Has AP (apurinic/apyrimidinic) lyase activity and introduces nicks in the DNA strand. Cleaves the DNA backbone by beta-delta elimination to generate a single-strand break at the site of the removed base with both 3'- and 5'-phosphates. The polypeptide is Formamidopyrimidine-DNA glycosylase (Lactobacillus helveticus (strain DPC 4571)).